We begin with the raw amino-acid sequence, 109 residues long: Nucleoid-associated protein YbaB (109 aa).

The protein belongs to the YbaB/EbfC family. Homodimer.

The protein resides in the cytoplasm. It localises to the nucleoid. In terms of biological role, binds to DNA and alters its conformation. May be involved in regulation of gene expression, nucleoid organization and DNA protection. The chain is Nucleoid-associated protein YbaB from Escherichia coli O8 (strain IAI1).